Here is a 369-residue protein sequence, read N- to C-terminus: Biglycan (369 aa).

A signal peptide spans 1–16; the sequence is MWPLWLVASLLALSQA. Positions 17 to 37 are excised as a propeptide; the sequence is LPFEQKGFWDFTLDDGLPMLN. O-linked (Xyl...) (glycosaminoglycan) serine glycans are attached at residues S42 and S48. Disulfide bonds link C64–C70 and C68–C77. LRR repeat units follow at residues 83–103, 104–127, 128–151, 152–172, 173–196, 197–221, 222–242, 243–266, 267–290, 291–313, 314–343, and 344–369; these read KAVP…NNDI, SELR…NNKI, SKIH…KNHL, VEIP…DNRI, RKVP…GNPL, ENSG…EAKL, TGIP…HNKI, QAIE…HNQI, RMIE…NNKL, SRVP…TNNI, TKVG…NNPV, and PYWE…NYKK. Residues N271 and N312 are each glycosylated (N-linked (GlcNAc...) asparagine). A disulfide bond links C322 and C355.

The protein belongs to the small leucine-rich proteoglycan (SLRP) family. SLRP class I subfamily. As to quaternary structure, homodimer. Forms a ternary complex with MFAP2 and ELN. In terms of processing, the two attached glycosaminoglycan chains can be either chondroitin sulfate or dermatan sulfate.

The protein resides in the secreted. It localises to the extracellular space. Its subcellular location is the extracellular matrix. May be involved in collagen fiber assembly. This chain is Biglycan (BGN), found in Canis lupus familiaris (Dog).